Consider the following 199-residue polypeptide: Adenylate kinase (199 aa).

8–13 (GAGKGT) contributes to the ATP binding site. The interval 28–57 (STGDIFRANIKNKTELGQQVKAIVDAGDYV) is NMP. Residues T29, R34, 55 to 57 (DYV), 83 to 86 (GYPR), and Q90 each bind AMP. The LID stretch occupies residues 124–134 (KRAREQGRADD). R125 provides a ligand contact to ATP. Positions 131 and 142 each coordinate AMP. Position 170 (G170) interacts with ATP.

This sequence belongs to the adenylate kinase family. In terms of assembly, monomer.

Its subcellular location is the cytoplasm. The catalysed reaction is AMP + ATP = 2 ADP. It functions in the pathway purine metabolism; AMP biosynthesis via salvage pathway; AMP from ADP: step 1/1. Catalyzes the reversible transfer of the terminal phosphate group between ATP and AMP. Plays an important role in cellular energy homeostasis and in adenine nucleotide metabolism. The protein is Adenylate kinase of Leifsonia xyli subsp. xyli (strain CTCB07).